A 340-amino-acid polypeptide reads, in one-letter code: Arginase 1, mitochondrial (340 aa).

The N-terminal 24 residues, 1–24 (MGGVAAGTRWIHHVRRLSAAKVSA), are a transit peptide targeting the mitochondrion. Mn(2+) is bound by residues His-159, Asp-183, His-185, and Asp-187. Substrate contacts are provided by residues 185-189 (HPDIY) and 193-195 (EGN). Residues Asp-268 and Asp-270 each contribute to the Mn(2+) site. Substrate is bound at residue Glu-311.

It belongs to the arginase family. It depends on Mn(2+) as a cofactor.

It localises to the mitochondrion. It carries out the reaction L-arginine + H2O = urea + L-ornithine. Its pathway is nitrogen metabolism; urea cycle; L-ornithine and urea from L-arginine: step 1/1. Functionally, catalyzes the hydrolysis of L-arginine to urea and L-ornithine. The latter can be utilized in the urea cycle or as a precursor for the synthesis of both polyamines and proline. This Oryza sativa subsp. japonica (Rice) protein is Arginase 1, mitochondrial (ARG1).